A 401-amino-acid polypeptide reads, in one-letter code: Argininosuccinate synthase (401 aa).

9-17 (AYSGGLDTS) provides a ligand contact to ATP. Tyr86 is a binding site for L-citrulline. Gly116 lines the ATP pocket. L-aspartate is bound by residues Thr118, Asn122, and Asp123. Position 122 (Asn122) interacts with L-citrulline. The L-citrulline site is built by Arg126, Ser174, Ser183, Glu259, and Tyr271.

This sequence belongs to the argininosuccinate synthase family. Type 1 subfamily. Homotetramer.

The protein localises to the cytoplasm. The enzyme catalyses L-citrulline + L-aspartate + ATP = 2-(N(omega)-L-arginino)succinate + AMP + diphosphate + H(+). It participates in amino-acid biosynthesis; L-arginine biosynthesis; L-arginine from L-ornithine and carbamoyl phosphate: step 2/3. The chain is Argininosuccinate synthase from Bacillus cereus (strain AH820).